The chain runs to 279 residues: Urease accessory protein UreD (279 aa).

Belongs to the UreD family. In terms of assembly, ureD, UreF and UreG form a complex that acts as a GTP-hydrolysis-dependent molecular chaperone, activating the urease apoprotein by helping to assemble the nickel containing metallocenter of UreC. The UreE protein probably delivers the nickel.

The protein localises to the cytoplasm. Functionally, required for maturation of urease via the functional incorporation of the urease nickel metallocenter. The polypeptide is Urease accessory protein UreD (Streptococcus thermophilus (strain ATCC BAA-250 / LMG 18311)).